A 240-amino-acid chain; its full sequence is uncharacterized protein (240 aa).

This is an uncharacterized protein from Bacillus subtilis (strain 168).